Here is a 470-residue protein sequence, read N- to C-terminus: Ribulose bisphosphate carboxylase large chain (470 aa).

Residues asparagine 115 and threonine 165 each coordinate substrate. The active-site Proton acceptor is the lysine 167. Lysine 169 is a substrate binding site. Residues lysine 193, aspartate 195, and glutamate 196 each contribute to the Mg(2+) site. Position 193 is an N6-carboxylysine (lysine 193). Catalysis depends on histidine 286, which acts as the Proton acceptor. Substrate contacts are provided by arginine 287, histidine 319, and serine 371.

This sequence belongs to the RuBisCO large chain family. Type I subfamily. In terms of assembly, heterohexadecamer of 8 large chains and 8 small chains. Forms a CsoS2-CsoS1-RuBisCO complex. Mg(2+) serves as cofactor.

The protein localises to the carboxysome. It catalyses the reaction 2 (2R)-3-phosphoglycerate + 2 H(+) = D-ribulose 1,5-bisphosphate + CO2 + H2O. The catalysed reaction is D-ribulose 1,5-bisphosphate + O2 = 2-phosphoglycolate + (2R)-3-phosphoglycerate + 2 H(+). RuBisCO catalyzes two reactions: the carboxylation of D-ribulose 1,5-bisphosphate, the primary event in carbon dioxide fixation, as well as the oxidative fragmentation of the pentose substrate in the photorespiration process. Both reactions occur simultaneously and in competition at the same active site. The sequence is that of Ribulose bisphosphate carboxylase large chain from Prochlorococcus marinus (strain MIT 9313).